A 600-amino-acid chain; its full sequence is Zinc metalloproteinase-disintegrin-like stejnihagin-B (600 aa).

The N-terminal stretch at 1–20 (MIEVLLVTICLAVFPYQGSS) is a signal peptide. Positions 21-191 (IILESGNVND…KASQLVVTAE (171 aa)) are excised as a propeptide. The residue at position 192 (Q192) is a Pyrrolidone carboxylic acid. In terms of domain architecture, Peptidase M12B spans 198 to 389 (RYVKLAIVAD…YNPQCILNAL (192 aa)). N-linked (GlcNAc...) asparagine glycosylation is found at N261 and N317. Cystine bridges form between C306-C384, C346-C368, and C348-C351. Residue H331 coordinates Zn(2+). Residue E332 is part of the active site. Residues H335 and H341 each contribute to the Zn(2+) site. The 87-residue stretch at 397-483 (PPVCGNELLE…DCPTDSFHRN (87 aa)) folds into the Disintegrin domain. Positions 399, 402, 404, 406, 409, and 412 each coordinate Ca(2+). Disulfide bonds link C400/C429, C411/C424, C413/C419, C423/C446, C437/C443, C442/C468, C455/C475, C462/C494, C487/C499, C506/C556, C521/C565, C534/C544, C551/C587, and C581/C593. An N-linked (GlcNAc...) asparagine glycan is attached at N425. Residues 461–463 (ECD) carry the D/ECD-tripeptide motif. The N-linked (GlcNAc...) asparagine glycan is linked to N467. N-linked (GlcNAc...) asparagine glycosylation is present at N513.

The protein belongs to the venom metalloproteinase (M12B) family. P-III subfamily. P-IIIa sub-subfamily. As to quaternary structure, monomer. Zn(2+) is required as a cofactor. In terms of tissue distribution, expressed by the venom gland.

The protein resides in the secreted. In terms of biological role, this metalloproteinase-disintegrin-like impairs hemostasis in the envenomed animal. This chain is Zinc metalloproteinase-disintegrin-like stejnihagin-B, found in Trimeresurus stejnegeri (Chinese green tree viper).